The chain runs to 117 residues: Putative iron-sulfur cluster insertion protein ErpA (117 aa).

Iron-sulfur cluster-binding residues include cysteine 45, cysteine 109, and cysteine 111.

Belongs to the HesB/IscA family. Homodimer. Requires iron-sulfur cluster as cofactor.

Functionally, required for insertion of 4Fe-4S clusters. This is Putative iron-sulfur cluster insertion protein ErpA from Methylobacillus flagellatus (strain ATCC 51484 / DSM 6875 / VKM B-1610 / KT).